The sequence spans 83 residues: Small ribosomal subunit protein bS16 (83 aa).

Belongs to the bacterial ribosomal protein bS16 family.

The polypeptide is Small ribosomal subunit protein bS16 (Magnetococcus marinus (strain ATCC BAA-1437 / JCM 17883 / MC-1)).